A 520-amino-acid polypeptide reads, in one-letter code: Amine oxidase [flavin-containing] B (520 aa).

At serine 2 the chain carries N-acetylserine. Residues 2 to 489 (SSKCDVVVVG…TFLERHLPSV (488 aa)) are Cytoplasmic-facing. The residue at position 52 (lysine 52) is an N6-acetyllysine. Cysteine 397 carries the S-8alpha-FAD cysteine modification. The helical; Anchor for type IV membrane protein transmembrane segment at 490-516 (PGLLRLIGLTAIFSATALGYLAHKRGL) threads the bilayer. Over 517-520 (LVRV) the chain is Mitochondrial intermembrane.

Belongs to the flavin monoamine oxidase family. In terms of assembly, monomer, homo- or heterodimer (containing two subunits of similar size). Each subunit contains a covalently bound flavin. Enzymatically active as monomer. Requires FAD as cofactor.

The protein resides in the mitochondrion outer membrane. The catalysed reaction is a secondary aliphatic amine + O2 + H2O = a primary amine + an aldehyde + H2O2. The enzyme catalyses (R)-adrenaline + O2 + H2O = (R)-3,4-dihydroxymandelaldehyde + methylamine + H2O2. It carries out the reaction a primary methyl amine + O2 + H2O = an aldehyde + H2O2 + NH4(+). It catalyses the reaction benzylamine + O2 + H2O = benzaldehyde + H2O2 + NH4(+). The catalysed reaction is dopamine + O2 + H2O = 3,4-dihydroxyphenylacetaldehyde + H2O2 + NH4(+). The enzyme catalyses tyramine + O2 + H2O = (4-hydroxyphenyl)acetaldehyde + H2O2 + NH4(+). It carries out the reaction (R)-noradrenaline + O2 + H2O = (R)-3,4-dihydroxymandelaldehyde + H2O2 + NH4(+). It catalyses the reaction 2-phenylethylamine + O2 + H2O = 2-phenylacetaldehyde + H2O2 + NH4(+). The catalysed reaction is N-acetylputrescine + O2 + H2O = 4-acetamidobutanal + H2O2 + NH4(+). Functionally, catalyzes the oxidative deamination of primary and some secondary amines such as neurotransmitters, and exogenous amines including the tertiary amine, neurotoxin 1-methyl-4-phenyl-1,2,3,6-tetrahydropyridine (MPTP), with concomitant reduction of oxygen to hydrogen peroxide and participates in the metabolism of neuroactive and vasoactive amines in the central nervous system and peripheral tissues. Preferentially degrades benzylamine and phenylethylamine. The polypeptide is Amine oxidase [flavin-containing] B (Sus scrofa (Pig)).